The sequence spans 452 residues: Keratin, type I cytoskeletal 42 (452 aa).

The head stretch occupies residues 4–93; the sequence is TTSVRQFSTS…GVSDALLGGS (90 aa). Residues 94-129 are coil 1A; the sequence is EKETMQNLNDRLATYLDRVRALEEANADLEVKIREW. In terms of domain architecture, IF rod spans 94 to 405; sequence EKETMQNLND…RLLEGEDAHL (312 aa). Positions 130 to 147 are linker 1; sequence YKKQGPGPARDYSPYFKT. The tract at residues 148–239 is coil 1B; it reads IEDLRNKILA…KNHEEEMNAL (92 aa). The segment at 240–262 is linker 12; that stretch reads RGQVGGDVNVEMDAAPGVDLSRI. Residues 263 to 401 are coil 2; the sequence is LNEMRDQYEK…ATYRRLLEGE (139 aa). The tail stretch occupies residues 402 to 452; the sequence is DAHLATQYSSSLASQPSREGMVTSRQVRTIVEEVQDGKVVSSREQVHRSTH.

This sequence belongs to the intermediate filament family. In terms of assembly, heterodimer of a type I and a type II keratin. Colocalizes with KRT8/KRT18 filament network. As to expression, expressed in nail matrix and nail bed epithelium (at protein level). Also expressed in tongue and digits with weak expression in vibrissae and in both filiform and fungiform papillae of oral mucosa.

It is found in the cytoplasm. The chain is Keratin, type I cytoskeletal 42 from Mus musculus (Mouse).